Consider the following 177-residue polypeptide: Deoxyuridine 5'-triphosphate nucleotidohydrolase (177 aa).

Substrate-binding positions include 83-85 (RSG), asparagine 96, 100-102 (TID), and lysine 110. Residues 150–163 (DLTSSQTDLSNQPN) are compositionally biased toward polar residues. The disordered stretch occupies residues 150–177 (DLTSSQTDLSNQPNTGRGTGGFGSTGQK). Over residues 166–177 (RGTGGFGSTGQK) the composition is skewed to gly residues.

The protein belongs to the dUTPase family. Mg(2+) serves as cofactor.

It catalyses the reaction dUTP + H2O = dUMP + diphosphate + H(+). It functions in the pathway pyrimidine metabolism; dUMP biosynthesis; dUMP from dCTP (dUTP route): step 2/2. Functionally, this enzyme is involved in nucleotide metabolism: it produces dUMP, the immediate precursor of thymidine nucleotides and it decreases the intracellular concentration of dUTP so that uracil cannot be incorporated into DNA. In Bartonella bacilliformis (strain ATCC 35685 / KC583 / Herrer 020/F12,63), this protein is Deoxyuridine 5'-triphosphate nucleotidohydrolase.